Here is a 150-residue protein sequence, read N- to C-terminus: Small ribosomal subunit protein uS7c (150 aa).

It belongs to the universal ribosomal protein uS7 family. In terms of assembly, part of the 30S ribosomal subunit.

The protein localises to the plastid. It localises to the chloroplast. One of the primary rRNA binding proteins, it binds directly to 16S rRNA where it nucleates assembly of the head domain of the 30S subunit. This chain is Small ribosomal subunit protein uS7c (rps7), found in Huperzia lucidula (Shining clubmoss).